A 254-amino-acid polypeptide reads, in one-letter code: Kallikrein-4 (254 aa).

The N-terminal stretch at 1-26 is a signal peptide; it reads MATAGNPWGWFLGYLILGVAGSLVSG. Positions 27-30 are excised as a propeptide; sequence SCSQ. Residues 31-252 enclose the Peptidase S1 domain; the sequence is IINGEDCSPH…FTEWIEKTVQ (222 aa). 6 disulfides stabilise this stretch: cysteine 37–cysteine 167, cysteine 56–cysteine 72, cysteine 141–cysteine 241, cysteine 148–cysteine 213, cysteine 178–cysteine 192, and cysteine 203–cysteine 228. Residue histidine 40 coordinates Zn(2+). Histidine 71 acts as the Charge relay system in catalysis. A Zn(2+)-binding site is contributed by glutamate 91. Aspartate 116 functions as the Charge relay system in the catalytic mechanism. Asparagine 169 carries an N-linked (GlcNAc...) asparagine glycan. Residue serine 207 is the Charge relay system of the active site.

Belongs to the peptidase S1 family. Kallikrein subfamily. In terms of processing, N-glycosylated. The N-glycan structures are of complex diantennary or triantennary type, which may be further modified with up to 2 sialic acid residues. As to expression, expressed in prostate.

Its subcellular location is the secreted. Its function is as follows. Has a major role in enamel formation. Required during the maturation stage of tooth development for clearance of enamel proteins and normal structural patterning of the crystalline matrix. This Homo sapiens (Human) protein is Kallikrein-4 (KLK4).